The following is a 452-amino-acid chain: Cell division protein FtsZ (452 aa).

GTP-binding positions include 24–28 (GAGSN), 111–113 (GTG), Glu142, Arg146, and Asp190.

Belongs to the FtsZ family. Homodimer. Polymerizes to form a dynamic ring structure in a strictly GTP-dependent manner. Interacts directly with several other division proteins.

The protein localises to the cytoplasm. In terms of biological role, essential cell division protein that forms a contractile ring structure (Z ring) at the future cell division site. The regulation of the ring assembly controls the timing and the location of cell division. One of the functions of the FtsZ ring is to recruit other cell division proteins to the septum to produce a new cell wall between the dividing cells. Binds GTP and shows GTPase activity. This Rickettsia felis (strain ATCC VR-1525 / URRWXCal2) (Rickettsia azadi) protein is Cell division protein FtsZ.